The chain runs to 126 residues: MRRKPYELKVEVKAVYLREHSRPDAHQYTFAYTVTMENTGTVPAKLLGRRWIITDANGKTVEVVGEGVVGEHPYLRPGEAFEYTSAATIATPVGSMHGSYQLIADDGMPFEAPIAAFSLAIPRRLH.

Residues 2 to 126 enclose the ApaG domain; sequence RRKPYELKVE…FSLAIPRRLH (125 aa).

The sequence is that of Protein ApaG from Methylococcus capsulatus (strain ATCC 33009 / NCIMB 11132 / Bath).